Consider the following 185-residue polypeptide: Anaphase-promoting complex subunit 10 (185 aa).

Threonine 2 carries the post-translational modification N-acetylthreonine. The 184-residue stretch at 2–185 (TTPNKTPPGA…IDFMMYRSIR (184 aa)) folds into the DOC domain. Lysine 169 is modified (N6-acetyllysine).

This sequence belongs to the APC10 family. As to quaternary structure, the mammalian APC/C is composed at least of 14 distinct subunits ANAPC1, ANAPC2, CDC27/APC3, ANAPC4, ANAPC5, CDC16/APC6, ANAPC7, CDC23/APC8, ANAPC10, ANAPC11, CDC26/APC12, ANAPC13, ANAPC15 and ANAPC16 that assemble into a complex of at least 19 chains with a combined molecular mass of around 1.2 MDa; APC/C interacts with FZR1 and FBXO5. The C-terminus of APC10 binds to CDC27/APC3. Interacts with PIWIL1; interaction only takes place when PIWIL1 binds piRNA. Interacts with FBXO43; the interaction is direct.

Its pathway is protein modification; protein ubiquitination. Its function is as follows. Component of the anaphase promoting complex/cyclosome (APC/C), a cell cycle-regulated E3 ubiquitin ligase that controls progression through mitosis and the G1 phase of the cell cycle. The APC/C complex acts by mediating ubiquitination and subsequent degradation of target proteins: it mainly mediates the formation of 'Lys-11'-linked polyubiquitin chains and, to a lower extent, the formation of 'Lys-48'- and 'Lys-63'-linked polyubiquitin chains. The APC/C complex catalyzes assembly of branched 'Lys-11'-/'Lys-48'-linked branched ubiquitin chains on target proteins. This Mus musculus (Mouse) protein is Anaphase-promoting complex subunit 10 (Anapc10).